The following is a 500-amino-acid chain: Potassium voltage-gated channel subfamily V member 1 (500 aa).

Residues 1 to 210 lie on the Cytoplasmic side of the membrane; sequence MPSSGRALLD…EKPGSSTAAR (210 aa). A compositionally biased stretch (basic and acidic residues) spans 168–181; the sequence is KKDTEDQESQHESE. The tract at residues 168–189 is disordered; it reads KKDTEDQESQHESEQDFSQGPC. Residues 211–231 traverse the membrane as a helical segment; sequence IFGVISIIFVVVSIINMALMS. Residues 232 to 238 lie on the Extracellular side of the membrane; the sequence is AELSWLD. Residues 239–259 form a helical membrane-spanning segment; the sequence is LQLLEILEYVCISWFTGEFVL. Residues 260 to 276 are Cytoplasmic-facing; that stretch reads RFLCVRDRCRFLRKVPN. The helical transmembrane segment at 277–297 threads the bilayer; it reads IIDLLAILPFYITLLVESLSG. At 298–309 the chain is on the extracellular side; that stretch reads SQTTQELENVGR. The helical; Voltage-sensor transmembrane segment at 310 to 331 threads the bilayer; it reads IVQVLRLLRALRMLKLGRHSTG. At 332 to 345 the chain is on the cytoplasmic side; that stretch reads LRSLGMTITQCYEE. A helical membrane pass occupies residues 346-366; it reads VGLLLLFLSVGISIFSTVEYF. The Selectivity filter motif lies at 392–397; it reads TVGYGD. A helical membrane pass occupies residues 407–427; it reads IVAFMCILSGILVLALPIAII. Residues 428–500 are Cytoplasmic-facing; that stretch reads NDRFSACYFT…RSSGGDDFWF (73 aa).

This sequence belongs to the potassium channel family. V (TC 1.A.1.2) subfamily. Kv8.1/KCNV1 sub-subfamily. Heteromultimer with KCNB1 and KCNB2. Interacts with KCNC4 and KCND1. Detected in brain.

The protein resides in the cell membrane. Its function is as follows. Potassium channel subunit that does not form functional channels by itself. Modulates KCNB1 and KCNB2 channel activity by shifting the threshold for inactivation to more negative values and by slowing the rate of inactivation. Can down-regulate the channel activity of KCNB1, KCNB2, KCNC4 and KCND1, possibly by trapping them in intracellular membranes. This chain is Potassium voltage-gated channel subfamily V member 1 (KCNV1), found in Homo sapiens (Human).